Reading from the N-terminus, the 439-residue chain is Eukaryotic translation initiation factor 2 subunit gamma (439 aa).

The tr-type G domain maps to 11 to 215 (QATLNIGTIG…FIVNYIPEPV (205 aa)). The interval 20–27 (GHVAHGKS) is G1. Residue 23-28 (AHGKST) participates in GTP binding. The tract at residues 48–52 (NITIK) is G2. Positions 103–106 (DCPG) are G3. GTP-binding positions include 159–162 (NKID) and 193–195 (AAQ). The interval 159–162 (NKID) is G4. The interval 193–195 (AAQ) is G5. An interacts with CDC123 region spans residues 415–427 (GEIKDGTCIEPEY).

The protein belongs to the TRAFAC class translation factor GTPase superfamily. Classic translation factor GTPase family. EIF2G subfamily. In terms of assembly, eukaryotic translation initiation factor 2 eIF2 is a heterotrimeric complex composed of an alpha, a beta and a gamma subunit. The factors eIF-1, eIF-2, eIF-3, TIF5/eIF-5 and methionyl-tRNAi form a multifactor complex (MFC) that may bind to the 40S ribosome.

The protein resides in the cytoplasm. It is found in the cytosol. The enzyme catalyses GTP + H2O = GDP + phosphate + H(+). Functionally, as a subunit of eukaryotic initiation factor 2 eIF2, involved in the early steps of protein synthesis. In the presence of GTP, eIF-2 forms a ternary complex with initiator tRNA Met-tRNAi and then recruits the 40S ribosomal complex and initiation factors eIF-1, eIF-1A and eIF-3 to form the 43S pre-initiation complex (43S PIC), a step that determines the rate of protein translation. The 43S PIC binds to mRNA and scans downstream to the initiation codon, where it forms a 48S initiation complex by codon-anticodon base pairing. This leads to the displacement of eIF-1 to allow GTPase-activating protein (GAP) eIF-5-mediated hydrolysis of eIF2-bound GTP. Hydrolysis of GTP and release of Pi, which makes GTP hydrolysis irreversible, causes the release of the eIF-2-GDP binary complex from the 40S subunit, an event that is essential for the subsequent joining of the 60S ribosomal subunit to form an elongation-competent 80S ribosome. In order for eIF-2 to recycle and catalyze another round of initiation, the GDP bound to eIF-2 must be exchanged with GTP by way of a reaction catalyzed by GDP-GTP exchange factor (GEF) eIF-2B. The protein is Eukaryotic translation initiation factor 2 subunit gamma of Encephalitozoon cuniculi (strain GB-M1) (Microsporidian parasite).